Here is a 632-residue protein sequence, read N- to C-terminus: 2-hydroxyacyl-CoA lyase 2 (632 aa).

A helical membrane pass occupies residues 10-30; sequence AWGFFSSFLLLAFGTLVAALL. Residue E98 participates in thiamine diphosphate binding. Residues 470-550 are thiamine pyrophosphate binding; that stretch reads DFVGTAAYLV…VMALIGNDAG (81 aa). Mg(2+) is bound by residues D521 and N547.

This sequence belongs to the TPP enzyme family. Mg(2+) is required as a cofactor. Thiamine diphosphate serves as cofactor.

The protein localises to the endoplasmic reticulum membrane. It catalyses the reaction 2-hydroxyoctadecanoyl-CoA = heptadecanal + formyl-CoA. The catalysed reaction is (2R)-hydroxyhexadecanoyl-CoA = pentadecanal + formyl-CoA. In terms of biological role, endoplasmic reticulum 2-OH acyl-CoA lyase involved in the cleavage (C1 removal) reaction in the fatty acid alpha-oxydation in a thiamine pyrophosphate (TPP)-dependent manner. Involved in the phytosphingosine degradation pathway. This is 2-hydroxyacyl-CoA lyase 2 (ILVBL) from Bos taurus (Bovine).